The sequence spans 155 residues: Large-conductance mechanosensitive channel (155 aa).

2 helical membrane passes run 25 to 45 (VLDL…VTSL) and 98 to 118 (GDFI…FLIV).

This sequence belongs to the MscL family. Homopentamer.

The protein resides in the cell inner membrane. Functionally, channel that opens in response to stretch forces in the membrane lipid bilayer. May participate in the regulation of osmotic pressure changes within the cell. The chain is Large-conductance mechanosensitive channel from Novosphingobium aromaticivorans (strain ATCC 700278 / DSM 12444 / CCUG 56034 / CIP 105152 / NBRC 16084 / F199).